The following is a 64-amino-acid chain: Lectin-A (64 aa).

Chitin-binding type-1 domains are found at residues 1 to 20 (APECGREAHCGDDCQSQVVT) and 22 to 45 (DFDDRTCPKLLCCSKDGWCGNTDA).

Glycosylated.

In terms of biological role, N-acetyl-D-glucosamine binding lectin. Shows low hemagglutinating activity towards human erythrocytes. Has low mitogenic activity towards human peripheral blood lymphocytes. This Phytolacca americana (American pokeweed) protein is Lectin-A.